A 553-amino-acid polypeptide reads, in one-letter code: Phosphoglucomutase (553 aa).

Positions M1 to K25 are disordered. Positions S11 to T20 are enriched in polar residues. Substrate-binding positions include T20, R24, S117–H118, and K131. S117 (phosphoserine intermediate) is an active-site residue. A Mg(2+)-binding site is contributed by S117. D289, D291, and D293 together coordinate Mg(2+). Substrate is bound by residues D293 to R294, T352, E371 to S373, K384, and R509.

This sequence belongs to the phosphohexose mutase family. Requires Mg(2+) as cofactor.

Its subcellular location is the cytoplasm. It carries out the reaction alpha-D-glucose 1-phosphate = alpha-D-glucose 6-phosphate. Catalyzes the reversible conversion of glucose 1-phosphate into glucose 6-phosphate. This enzyme participates in both the breakdown and synthesis of glucose. In Entamoeba histolytica (strain ATCC 30459 / HM-1:IMSS / ABRM), this protein is Phosphoglucomutase.